Reading from the N-terminus, the 477-residue chain is Aspartyl/glutamyl-tRNA(Asn/Gln) amidotransferase subunit B (477 aa).

The protein belongs to the GatB/GatE family. GatB subfamily. As to quaternary structure, heterotrimer of A, B and C subunits.

It carries out the reaction L-glutamyl-tRNA(Gln) + L-glutamine + ATP + H2O = L-glutaminyl-tRNA(Gln) + L-glutamate + ADP + phosphate + H(+). It catalyses the reaction L-aspartyl-tRNA(Asn) + L-glutamine + ATP + H2O = L-asparaginyl-tRNA(Asn) + L-glutamate + ADP + phosphate + 2 H(+). Its function is as follows. Allows the formation of correctly charged Asn-tRNA(Asn) or Gln-tRNA(Gln) through the transamidation of misacylated Asp-tRNA(Asn) or Glu-tRNA(Gln) in organisms which lack either or both of asparaginyl-tRNA or glutaminyl-tRNA synthetases. The reaction takes place in the presence of glutamine and ATP through an activated phospho-Asp-tRNA(Asn) or phospho-Glu-tRNA(Gln). This is Aspartyl/glutamyl-tRNA(Asn/Gln) amidotransferase subunit B from Legionella pneumophila (strain Corby).